The sequence spans 96 residues: Putative regulatory protein Teth514_1762 (96 aa).

Belongs to the RemA family.

The chain is Putative regulatory protein Teth514_1762 from Thermoanaerobacter sp. (strain X514).